The following is a 1077-amino-acid chain: TSC22 domain family protein 1 (1077 aa).

The required for interaction with TGFBR1 and promotion of TGF-beta signaling stretch occupies residues 1 to 98 (MHQPPESTAA…SQAQLQGQPL (98 aa)). Disordered regions lie at residues 22 to 112 (MAHP…SGFQ), 125 to 283 (ISSN…VPSS), 458 to 492 (QTPT…SVGS), 842 to 874 (SSAA…GSLV), and 909 to 947 (QAIG…SDGS). Positions 58–70 (FPPPSLLQPPPPA) are enriched in pro residues. The span at 84 to 96 (SLNLLSQAQLQGQ) shows a compositional bias: low complexity. The span at 133–142 (EDTESYDDLD) shows a compositional bias: acidic residues. Residues 216 to 240 (HPHHLHHHHHPHHGHHLHHGHHHSS) show a composition bias toward basic residues. Ser263 bears the Phosphoserine mark. Positions 471–489 (TSGSSVSSSVSTLSHYTES) are enriched in low complexity. The span at 852 to 874 (VPTNLVPPQNIAQPPATQNGSLV) shows a compositional bias: polar residues. Residues 933-947 (MSGDSGGMSAVSDGS) are compositionally biased toward low complexity. Residues 1010–1031 (LKEQIKELIEKNSQLEQENNLL) are leucine-zipper. The interval 1042-1077 (QFQAQLQTGSPPATTQPQGTTQPPAQPASQGSGSTA) is disordered. Positions 1048-1077 (QTGSPPATTQPQGTTQPPAQPASQGSGSTA) are enriched in low complexity.

This sequence belongs to the TSC-22/Dip/Bun family. As to quaternary structure, forms homodimers. Forms heterodimers. Component of a complex composed of TSC22D1 (via N-terminus), TGFBR1 and TGFBR2; the interaction between TSC22D1 and TGFBR1 is inhibited by SMAD7 and promoted by TGFB1. Interacts with SMAD7; the interaction requires TGF-beta and the interaction is inhibited by TGFBR1. Interacts with TPT1/fortilin; interaction results in the destabilization of TSC22D1 protein and prevents TSC22D1-mediated apoptosis. Interacts with SMAD4 (via N-terminus). Interacts with ACVRL1/ALK1, ACVR1/ALK2, BMPR1A/ALK3, ACVR1B/ALK4, BMPR1B/ALK6, ACVR2A/ACTRII, and BMPR2. Interacts with SMAD6. Interacts with TFE3; the interaction is enhanced in the presence of TGF-beta. Forms a heterodimer with TSC22D4/THG1. In terms of assembly, forms a heterodimer with TSC22D4/THG1. Interacts with histone H1-2. Interacts with GNL3. In terms of tissue distribution, expressed in bone marrow cells (at protein level). Expressed in T-cells. Expressed in the brain. Expressed in the myoepithelial cells of the mammary gland ducts and alveoli, expression is consistent throughout pregnancy, lactation and involution (at protein level). Expressed in the cortex, medulla and papilla of the kidney. As to expression, expressed in the myoepithelial cells of the mammary gland, expression significantly increases in the secretory luminal epithelium of the mammary gland at the initiation of involution, with levels decreasing from day 3 of involution onwards (at protein level). Expressed in the cortex, medulla and papilla of the kidney.

The protein resides in the cytoplasm. The protein localises to the nucleus. It is found in the cell membrane. Its subcellular location is the mitochondrion. Its function is as follows. Transcriptional repressor. Acts on the C-type natriuretic peptide (CNP) promoter. Acts to promote CASP3-mediated apoptosis. Positively regulates TGF-beta signaling by interacting with SMAD7 which inhibits binding of SMAD7 to TGFBR1, preventing recruitment of SMURF ubiquitin ligases to TGFBR1 and inhibiting SMURF-mediated ubiquitination and degradation of TGFBR1. Contributes to enhancement of TGF-beta signaling by binding to and modulating the transcription activator activity of SMAD4. Promotes TGF-beta-induced transcription of COL1A2; via its interaction with TFE3 at E-boxes in the gene proximal promoter. Plays a role in the repression of hematopoietic precursor cell growth. Promotes IL2 deprivation-induced apoptosis in T-lymphocytes, via repression of TSC22D3/GILZ transcription and activation of the caspase cascade. May act to negatively regulate TGFB3 signaling and thereby inhibit cell death in mammary gland cells. In terms of biological role, positively regulates cell death in response to TGFB3 during mammary gland involution. This is TSC22 domain family protein 1 from Mus musculus (Mouse).